Consider the following 363-residue polypeptide: NADH-quinone oxidoreductase subunit H (363 aa).

9 consecutive transmembrane segments (helical) span residues 62 to 82 (GPMY…KLLF), 96 to 116 (FVIA…VVPF), 127 to 147 (VGLL…ILAG), 163 to 183 (AAQV…VMIA), 202 to 222 (FFDW…VSGV), 238 to 257 (EIVA…LFFL), 264 to 286 (ILVS…QGWV), 299 to 319 (KGGW…YIWF), and 339 to 359 (FIPL…YGVI).

It belongs to the complex I subunit 1 family. As to quaternary structure, NDH-1 is composed of 14 different subunits. Subunits NuoA, H, J, K, L, M, N constitute the membrane sector of the complex.

The protein resides in the cell inner membrane. The catalysed reaction is a quinone + NADH + 5 H(+)(in) = a quinol + NAD(+) + 4 H(+)(out). Its function is as follows. NDH-1 shuttles electrons from NADH, via FMN and iron-sulfur (Fe-S) centers, to quinones in the respiratory chain. The immediate electron acceptor for the enzyme in this species is believed to be ubiquinone. Couples the redox reaction to proton translocation (for every two electrons transferred, four hydrogen ions are translocated across the cytoplasmic membrane), and thus conserves the redox energy in a proton gradient. This subunit may bind ubiquinone. The protein is NADH-quinone oxidoreductase subunit H of Xanthomonas axonopodis pv. citri (strain 306).